We begin with the raw amino-acid sequence, 213 residues long: Protein big brother (213 aa).

Belongs to the CBF-beta family.

The protein resides in the nucleus. Regulates the DNA-binding properties of Runt. The chain is Protein big brother (Bgb) from Drosophila melanogaster (Fruit fly).